We begin with the raw amino-acid sequence, 201 residues long: uncharacterized protein (201 aa).

The chain crosses the membrane as a helical span at residues 11–31; it reads IWKSLYLLIIVGMLYIGYILI.

Its subcellular location is the membrane. This is an uncharacterized protein from Rickettsia prowazekii (strain Madrid E).